The primary structure comprises 665 residues: E3 ubiquitin-protein ligase cblA (665 aa).

The disordered stretch occupies residues 30 to 50 (NNNNNINNNNNNNNINSNNNG). Residues 109-231 (TSLVNYIHYE…NNENNNNNNN (123 aa)) form a 4H region. Residues 109-400 (TSLVNYIHYE…PDIFKSILSF (292 aa)) form the Cbl-PTB domain. The EF-hand-like stretch occupies residues 232–306 (NYNPYELLSN…FKLSVFIKWF (75 aa)). 4 residues coordinate Ca(2+): D287, T289, D291, and Y293. Residues 307–400 (GALPVSLGIF…PDIFKSILSF (94 aa)) are SH2-like. Disordered stretches follow at residues 437–456 (ENNN…INTF) and 467–609 (DSSN…NNNN). Over residues 467–478 (DSSNSSDTNKSP) the composition is skewed to low complexity. A coiled-coil region spans residues 479-544 (TKSRKSSFKN…NNNNNNNNNN (66 aa)). Positions 486–512 (FKNDKDKKEKEKEKGKDKEKEKERVSD) are enriched in basic and acidic residues. Composition is skewed to low complexity over residues 530–561 (NNNN…NNNN) and 571–609 (TSNG…NNNN). Residues 618–653 (CTVCMDNEINTVFLECGHLSCCSLCSVKLKKCPICR) form an RING-type zinc finger.

In terms of processing, ubiquitinated.

It localises to the cytoplasm. The protein localises to the nucleus. It carries out the reaction S-ubiquitinyl-[E2 ubiquitin-conjugating enzyme]-L-cysteine + [acceptor protein]-L-lysine = [E2 ubiquitin-conjugating enzyme]-L-cysteine + N(6)-ubiquitinyl-[acceptor protein]-L-lysine.. Its pathway is protein modification; protein ubiquitination. Acts as an E3 ubiquitin-protein ligase, which accepts ubiquitin from specific E2 ubiquitin-conjugating enzymes, and then transfers it to substrates promoting their degradation by the proteasome. Up-regulates STATc tyrosine phosphorylation via an inhibitory effect on ptpC accumulation. Recognizes activated receptor tyrosine kinases, RTKs and terminates signaling. The polypeptide is E3 ubiquitin-protein ligase cblA (cblA-1) (Dictyostelium discoideum (Social amoeba)).